We begin with the raw amino-acid sequence, 549 residues long: Elongator complex protein 3 (549 aa).

Residues 84–374 (RTASGIAVVA…YRVQRDIPMP (291 aa)) enclose the Radical SAM core domain. [4Fe-4S] cluster is bound by residues Cys101, Cys111, and Cys114. Residues Lys166, 476 to 479 (ELHV), 499 to 501 (FGM), and Tyr532 contribute to the acetyl-CoA site. An N-acetyltransferase domain is found at 398–549 (TECRDVRTRE…EGPYMVKKLD (152 aa)).

This sequence belongs to the ELP3 family. Component of the elongator complex. Interacts with transcriptional repressors snai1 and snai2; interaction with snai1 inhibits its ubiquitination and stabilizes it. The cofactor is [4Fe-4S] cluster.

The protein localises to the cytoplasm. It localises to the nucleus. The catalysed reaction is uridine(34) in tRNA + acetyl-CoA + S-adenosyl-L-methionine + H2O = 5-(carboxymethyl)uridine(34) in tRNA + 5'-deoxyadenosine + L-methionine + CoA + 2 H(+). It functions in the pathway tRNA modification; 5-methoxycarbonylmethyl-2-thiouridine-tRNA biosynthesis. In terms of biological role, catalytic tRNA acetyltransferase subunit of the elongator complex which is required for multiple tRNA modifications, including mcm5U (5-methoxycarbonylmethyl uridine), mcm5s2U (5-methoxycarbonylmethyl-2-thiouridine), and ncm5U (5-carbamoylmethyl uridine). In the elongator complex, acts as a tRNA uridine(34) acetyltransferase by mediating formation of carboxymethyluridine in the wobble base at position 34 in tRNAs. Stabilizes transcriptional repressor snai1 by inhibiting its ubiquitination which promotes neural crest cell migration. This Xenopus tropicalis (Western clawed frog) protein is Elongator complex protein 3.